We begin with the raw amino-acid sequence, 798 residues long: Integrin beta-1 (798 aa).

The signal sequence occupies residues 1–20; the sequence is MNLQPIFWIGLISSICCVFA. Residues 26–76 form the PSI domain; it reads RCLKANAKSCGECIQAGPNCGWCTNSTFLQEGMPTSARCDDLEALKKKGCP. 28 cysteine pairs are disulfide-bonded: Cys27–Cys45, Cys35–Cys464, Cys38–Cys64, Cys48–Cys75, Cys207–Cys213, Cys261–Cys301, Cys401–Cys415, Cys435–Cys462, Cys466–Cys486, Cys477–Cys489, Cys491–Cys500, Cys502–Cys533, Cys516–Cys531, Cys525–Cys536, Cys538–Cys553, Cys555–Cys576, Cys560–Cys574, Cys568–Cys579, Cys581–Cys590, Cys592–Cys615, Cys599–Cys613, Cys607–Cys618, Cys620–Cys630, Cys633–Cys636, Cys640–Cys691, Cys646–Cys665, Cys649–Cys661, and Cys699–Cys723. Asn50 is a glycosylation site (N-linked (GlcNAc...) asparagine). The interval 75–107 is disordered; sequence CPPDDIENPRGSKDIKKNKNVTNRSKGTAEKLK. The segment covering 81–91 has biased composition (basic and acidic residues); sequence ENPRGSKDIKK. 2 N-linked (GlcNAc...) asparagine glycosylation sites follow: Asn94 and Asn97. Residues 140–378 enclose the VWFA domain; that stretch reads DYPIDLYYLM…QLIIDAYNSL (239 aa). Mg(2+) is bound by residues Ser152 and Ser154. The Ca(2+) site is built by Ser154, Asp157, Asp158, and Glu189. A CX3CL1-binding region spans residues 207–213; the sequence is CTSEQNC. N-linked (GlcNAc...) asparagine glycosylation is present at Asn212. 4 residues coordinate Ca(2+): Asn244, Asp246, Pro248, and Glu249. Glu249 contacts Mg(2+). Asn269 is a glycosylation site (N-linked (GlcNAc...) asparagine). The interval 295–314 is CX3CL1-binding; it reads LPNDGQCHLENNMYTMSHYY. Ca(2+) is bound at residue Ala362. N-linked (GlcNAc...) asparagine glycosylation is found at Asn363, Asn406, and Asn417. The interval 383 to 465 is interaction with TMEM182; the sequence is ILENSKLSEG…VILQYICECE (83 aa). I-EGF domains are found at residues 466-501, 502-554, 555-591, and 592-631; these read CQSEGIPESPKCHEGNGTFECGACRCNEGRVGRHCE, CSTD…KFCE, CDNFNCDRSNGLICGGNGVCKCRVCECNPNYTGSACD, and CSLDTSTCEASNGQICNGRGICECGVCKCTDPKFQGQTCE. Asn481 carries an N-linked (GlcNAc...) asparagine glycan. N-linked (GlcNAc...) asparagine glycosylation occurs at Asn520. Asn584 is a glycosylation site (N-linked (GlcNAc...) asparagine). N-linked (GlcNAc...) asparagine glycosylation is present at Asn669. Residues 729-749 form a helical membrane-spanning segment; it reads IIPIVAGVVAGIVLIGLALLL. The interval 762–767 is signal for sorting from recycling endosomes; interaction with ACAP1; the sequence is EFAKFE. Phosphothreonine is present on Thr777. Tyr783 is subject to Phosphotyrosine. Position 785 is a phosphoserine (Ser785). An interaction with ITGB1BP1 region spans residues 785 to 792; that stretch reads SAVTTVVN. Thr789 is modified (phosphothreonine). Lys794 bears the N6-acetyllysine; alternate mark. Residue Lys794 forms a Glycyl lysine isopeptide (Lys-Gly) (interchain with G-Cter in SUMO1); alternate linkage.

The protein belongs to the integrin beta chain family. As to quaternary structure, interacts with seprase FAP (seprase); the interaction occurs at the cell surface of invadopodia membrane in a collagen-dependent manner. Heterodimer of an alpha and a beta subunit. Beta-1 associates with either alpha-1, alpha-2, alpha-3, alpha-4, alpha-5, alpha-6, alpha-7, alpha-8, alpha-9, alpha-10, alpha-11 or alpha-V. ITGA6:ITGB1 is found in a complex with CD9; interaction takes place in oocytes and is involved in sperm-egg fusion. Binds LGALS3BP and NMRK2, when associated with alpha-7, but not with alpha-5. Interacts with FLNA, FLNB, FLNC and RANBP9. Interacts with KRT1 in the presence of RACK1 and SRC. Interacts with JAML; integrin alpha-4/beta-1 may regulate leukocyte to endothelial cells adhesion by controlling JAML homodimerization. Interacts with RAB21. Interacts (via the cytoplasmic region) with RAB25 (via the hypervariable C-terminal region). Interacts with MYO10. Interacts with ITGB1BP1 (via C-terminal region); the interaction is a prerequisite for focal adhesion disassembly. Interacts with TLN1; the interaction is prevented by competitive binding of ITGB1BP1. Interacts with ACAP1; required for ITGB1 recycling. Interacts with ASAP3. Interacts with FERMT2; the interaction is inhibited in presence of ITGB1BP1. Interacts with DAB2. Interacts with FGR and HCK. Interacts with alpha-7A and alpha-7B in adult skeletal muscle. Interacts with alpha-7B in cardiomyocytes of adult heart. Interacts with EMP2; the interaction may be direct or indirect and ITGB1 has a heterodimer form. ITGA5:ITGB1 interacts with CCN3. ITGA4:ITGB1 is found in a ternary complex with CX3CR1 and CX3CL1. ITGA5:ITGB1 interacts with FBN1. ITGA5:ITGB1 acts as a receptor for fibronectin FN1 and mediates R-G-D-dependent cell adhesion to FN1. ITGA5:ITGB1 interacts with IL1B. Interacts with MDK. ITGA4:ITGB1 interacts with MDK; this interaction mediates MDK-induced osteoblast cells migration through PXN phosphorylation. ITGA6:ITGB1 interacts with MDK; this interaction mediates MDK-induced neurite-outgrowth. ITGA5:ITGB1 interacts with ACE2. Interacts with TMEM182 and LAMB1. Interacts with tensin TNS3; TNS3 also interacts with PEAK1, thus acting as an adapter molecule to bridge the association of PEAK1 with ITGB1. Interacts with tensin TNS4; the interaction displaces tensin TNS3 from the ITGB1 cytoplasmic tail and promotes ITGB1 stability. Integrin ITGA9:ITGB1 interacts with SPP1/OPN (via N-terminus). Integrin ITGA9:ITGB1 interacts with TNC/TNFN3 (via the 3rd Fibronectin type-III domain). Integrins ITGA4:ITGB1 and ITGA9:ITGB1 interact with SVEP1 (via Sushi domain 21); thereby inhibit Ca(2+) intracellular signaling and as a result repress vasocontraction. ITGA4:ITGB1 and ITGA5:ITGB1 interacts with SELP. Interacts with CD248. ITGA5:ITGB1 interacts with IGFBP1. ITGA4:ITGB1 interacts with BCAM. Interacts with ADGRG6.

The protein resides in the cell membrane. It is found in the cell projection. Its subcellular location is the invadopodium membrane. It localises to the ruffle membrane. The protein localises to the recycling endosome. The protein resides in the melanosome. It is found in the lamellipodium. Its subcellular location is the ruffle. It localises to the cell junction. The protein localises to the focal adhesion. Functionally, integrins alpha-1/beta-1, alpha-2/beta-1, alpha-10/beta-1 and alpha-11/beta-1 are receptors for collagen. Integrins alpha-1/beta-1 and alpha-2/beta-2 recognize the proline-hydroxylated sequence G-F-P-G-E-R in collagen. Integrins alpha-2/beta-1, alpha-3/beta-1, alpha-4/beta-1, alpha-5/beta-1, alpha-8/beta-1, alpha-10/beta-1, alpha-11/beta-1 and alpha-V/beta-1 are receptors for fibronectin. Alpha-4/beta-1 recognizes one or more domains within the alternatively spliced CS-1 and CS-5 regions of fibronectin. Integrin alpha-5/beta-1 is a receptor for fibrinogen. Integrin alpha-1/beta-1, alpha-2/beta-1, alpha-6/beta-1 and alpha-7/beta-1 are receptors for lamimin. Integrin alpha-6/beta-1 (ITGA6:ITGB1) is present in oocytes and is involved in sperm-egg fusion. Integrin alpha-4/beta-1 is a receptor for VCAM1 and recognizes the sequence Q-I-D-S in VCAM1. Integrin alpha-9/beta-1 is a receptor for VCAM1, cytotactin and osteopontin. It recognizes the sequence A-E-I-D-G-I-E-L in cytotactin. Integrin alpha-3/beta-1 is a receptor for epiligrin, thrombospondin and CSPG4. Integrin alpha-3/beta-1 provides a docking site for FAP (seprase) at invadopodia plasma membranes in a collagen-dependent manner and hence may participate in the adhesion, formation of invadopodia and matrix degradation processes, promoting cell invasion. Alpha-3/beta-1 may mediate with LGALS3 the stimulation by CSPG4 of endothelial cells migration. Integrin alpha-V/beta-1 is a receptor for vitronectin. Beta-1 integrins recognize the sequence R-G-D in a wide array of ligands. When associated with alpha-7/beta-1 integrin, regulates cell adhesion and laminin matrix deposition. Involved in promoting endothelial cell motility and angiogenesis. Involved in osteoblast compaction through the fibronectin fibrillogenesis cell-mediated matrix assembly process and the formation of mineralized bone nodules. May be involved in up-regulation of the activity of kinases such as PKC via binding to KRT1. Together with KRT1 and RACK1, serves as a platform for SRC activation or inactivation. Plays a mechanistic adhesive role during telophase, required for the successful completion of cytokinesis. ITGA4:ITGB1 binds to fractalkine (CX3CL1) and may act as its coreceptor in CX3CR1-dependent fractalkine signaling. ITGA4:ITGB1 and ITGA5:ITGB1 bind to PLA2G2A via a site (site 2) which is distinct from the classical ligand-binding site (site 1) and this induces integrin conformational changes and enhanced ligand binding to site 1. ITGA5:ITGB1 acts as a receptor for fibrillin-1 (FBN1) and mediates R-G-D-dependent cell adhesion to FBN1. ITGA5:ITGB1 is a receptor for IL1B and binding is essential for IL1B signaling. ITGA5:ITGB3 is a receptor for soluble CD40LG and is required for CD40/CD40LG signaling. Plays an important role in myoblast differentiation and fusion during skeletal myogenesis. ITGA9:ITGB1 may play a crucial role in SVEP1/polydom-mediated myoblast cell adhesion. Integrins ITGA9:ITGB1 and ITGA4:ITGB1 repress PRKCA-mediated L-type voltage-gated channel Ca(2+) influx and ROCK-mediated calcium sensitivity in vascular smooth muscle cells via their interaction with SVEP1, thereby inhibit vasocontraction. The sequence is that of Integrin beta-1 (ITGB1) from Pongo abelii (Sumatran orangutan).